A 274-amino-acid chain; its full sequence is Thiamine kinase (274 aa).

Belongs to the thiamine kinase family.

The catalysed reaction is thiamine + ATP = thiamine phosphate + ADP + H(+). It functions in the pathway cofactor biosynthesis; thiamine diphosphate biosynthesis; thiamine phosphate from thiamine: step 1/1. Functionally, catalyzes the ATP-dependent phosphorylation of thiamine to thiamine phosphate. Is involved in thiamine salvage. This is Thiamine kinase from Escherichia coli (strain SMS-3-5 / SECEC).